Here is a 622-residue protein sequence, read N- to C-terminus: Low affinity potassium transport system protein Kup (622 aa).

12 consecutive transmembrane segments (helical) span residues 9–29 (LPAI…TSPL), 49–69 (VFGF…IKYL), 103–123 (VIMG…TPAI), 137–157 (PQLD…LFMI), 165–185 (VGKL…GLGL), 213–233 (VSFI…ALYA), 247–267 (WFTV…ALLL), 276–296 (PFFL…AALA), 337–357 (IYIP…IVSF), 363–383 (LAAA…ILST), 396–416 (FVAL…TANL), and 419–439 (LLSG…VMTT).

It belongs to the HAK/KUP transporter (TC 2.A.72) family.

The protein localises to the cell inner membrane. It catalyses the reaction K(+)(in) + H(+)(in) = K(+)(out) + H(+)(out). Responsible for the low-affinity transport of potassium into the cell. Likely operates as a K(+):H(+) symporter. In Shigella flexneri serotype 5b (strain 8401), this protein is Low affinity potassium transport system protein Kup.